The primary structure comprises 492 residues: Uridine-cytidine kinase D (492 aa).

A disordered region spans residues 36-56 (PLPKNKKDHDQSIESDSSFTR). Residue 117 to 124 (GPVGAGKT) participates in ATP binding. In terms of domain architecture, CYTH spans 290–460 (EPVYVCKAKY…PQTFLYLYFK (171 aa)). Residues 468–483 (PNYSKLKPNNTNSKIL) are compositionally biased toward low complexity. The interval 468–492 (PNYSKLKPNNTNSKILKNNKDKKNL) is disordered.

It belongs to the uridine kinase family.

The enzyme catalyses uridine + ATP = UMP + ADP + H(+). It catalyses the reaction cytidine + ATP = CMP + ADP + H(+). Its pathway is pyrimidine metabolism; CTP biosynthesis via salvage pathway; CTP from cytidine: step 1/3. It participates in pyrimidine metabolism; UMP biosynthesis via salvage pathway; UMP from uridine: step 1/1. Catalyzes the conversion of uridine into uridine monophosphate and cytidine into cytidine monophosphate in the pyrimidine salvage pathway. This Dictyostelium discoideum (Social amoeba) protein is Uridine-cytidine kinase D (udkD).